The sequence spans 347 residues: Methylthioribose-1-phosphate isomerase (347 aa).

Residues 47 to 49 (RGA), Arg-90, and Gln-199 contribute to the substrate site. The Proton donor role is filled by Asp-240. A substrate-binding site is contributed by 250–251 (NK).

This sequence belongs to the eIF-2B alpha/beta/delta subunits family. MtnA subfamily.

The enzyme catalyses 5-(methylsulfanyl)-alpha-D-ribose 1-phosphate = 5-(methylsulfanyl)-D-ribulose 1-phosphate. It functions in the pathway amino-acid biosynthesis; L-methionine biosynthesis via salvage pathway; L-methionine from S-methyl-5-thio-alpha-D-ribose 1-phosphate: step 1/6. Catalyzes the interconversion of methylthioribose-1-phosphate (MTR-1-P) into methylthioribulose-1-phosphate (MTRu-1-P). The chain is Methylthioribose-1-phosphate isomerase from Natranaerobius thermophilus (strain ATCC BAA-1301 / DSM 18059 / JW/NM-WN-LF).